The primary structure comprises 105 residues: MSEFKNVTAVKKANVYFDGKVSSRVIILPNGERKTLGLMLPGEYTFSTREEEIMEMLAGSMDVKLPGSNEFVTYKEGQKFNVPSDSSFDLKVNEVVDYCCSYIAD.

The protein belongs to the nucleoside phosphorylase PpnP family.

It catalyses the reaction a purine D-ribonucleoside + phosphate = a purine nucleobase + alpha-D-ribose 1-phosphate. The enzyme catalyses adenosine + phosphate = alpha-D-ribose 1-phosphate + adenine. The catalysed reaction is cytidine + phosphate = cytosine + alpha-D-ribose 1-phosphate. It carries out the reaction guanosine + phosphate = alpha-D-ribose 1-phosphate + guanine. It catalyses the reaction inosine + phosphate = alpha-D-ribose 1-phosphate + hypoxanthine. The enzyme catalyses thymidine + phosphate = 2-deoxy-alpha-D-ribose 1-phosphate + thymine. The catalysed reaction is uridine + phosphate = alpha-D-ribose 1-phosphate + uracil. It carries out the reaction xanthosine + phosphate = alpha-D-ribose 1-phosphate + xanthine. In terms of biological role, catalyzes the phosphorolysis of diverse nucleosides, yielding D-ribose 1-phosphate and the respective free bases. Can use uridine, adenosine, guanosine, cytidine, thymidine, inosine and xanthosine as substrates. Also catalyzes the reverse reactions. This Clostridioides difficile (strain 630) (Peptoclostridium difficile) protein is Pyrimidine/purine nucleoside phosphorylase.